The primary structure comprises 54 residues: Conotoxin mr5.4b (54 aa).

An N-terminal signal peptide occupies residues isoleucine 1–alanine 14. A propeptide spanning residues glutamine 15–asparagine 40 is cleaved from the precursor. Glutamate 52 bears the 4-carboxyglutamate mark.

Belongs to the conotoxin T superfamily. Contains 2 disulfide bonds that can be either 'C1-C3, C2-C4' or 'C1-C4, C2-C3', since these disulfide connectivities have been observed for conotoxins with cysteine framework V (for examples, see AC P0DQQ7 and AC P81755). As to expression, expressed by the venom duct.

Its subcellular location is the secreted. The sequence is that of Conotoxin mr5.4b from Conus marmoreus (Marble cone).